A 2458-amino-acid chain; its full sequence is Acetyl-CoA carboxylase 2 (2458 aa).

Ser-35 is subject to Phosphoserine. The segment at 35–155 (SKSEANLIPS…SPSKEDKKQA (121 aa)) is disordered. Polar residues predominate over residues 51-60 (SDNSGETPQR). Phosphothreonine is present on Thr-70. Over residues 77–87 (ASHKGPKDAGR) the composition is skewed to basic and acidic residues. Residues Ser-91 and Ser-95 each carry the phosphoserine modification. Residues 103–146 (PLSSSDAAPSPELQANGTGTQGLEATDTNGLSSSARPQGQQAGS) are compositionally biased toward polar residues. Phosphoserine occurs at positions 169, 175, 192, 195, and 200. The segment at 174-193 (SSDEDSVAGSSRESTRKGSR) is disordered. Phosphothreonine is present on Thr-207. Ser-220 is subject to Phosphoserine. Ser-222 bears the Phosphoserine; by AMPK mark. One can recognise a Biotin carboxylation domain in the interval 259–761 (VIEKVLIANN…DTGWLDYLIA (503 aa)). The 196-residue stretch at 414 to 609 (DDLQQGKRIS…LPAAQLQIAM (196 aa)) folds into the ATP-grasp domain. 458–463 (GGGGKG) is an ATP binding site. At Ser-469 the chain carries Phosphoserine. 3 residues coordinate Mg(2+): Glu-567, Glu-580, and Asn-582. Mn(2+) is bound by residues Glu-567, Glu-580, and Asn-582. Residue Arg-584 is part of the active site. Residue Thr-753 is modified to Phosphothreonine. Residues 888–962 (FEKENDPTVL…EAGCVVARLE (75 aa)) form the Biotinyl-binding domain. Residue Lys-929 is modified to N6-biotinyllysine. The residue at position 1340 (Ser-1340) is a Phosphoserine. Thr-1342 is subject to Phosphothreonine. A phosphoserine mark is found at Ser-1360 and Ser-1405. The 331-residue stretch at 1695–2025 (PYVTKDLLQA…DNHSPVPIIT (331 aa)) folds into the CoA carboxyltransferase N-terminal domain. Positions 1695–2345 (PYVTKDLLQA…EDQVKQEILQ (651 aa)) are carboxyltransferase. CoA-binding residues include Arg-1934, Lys-2238, and Arg-2240. The region spanning 2029–2345 (PIDREIEFLP…EDQVKQEILQ (317 aa)) is the CoA carboxyltransferase C-terminal domain.

As to quaternary structure, monomer, homodimer, and homotetramer. Forms filamentous polymers. Interacts with MID1IP1; interaction with MID1IP1 promotes oligomerization and increases its activity in a citrate-dependent manner. Biotin is required as a cofactor. It depends on Mg(2+) as a cofactor. Requires Mn(2+) as cofactor. The biotin cofactor is covalently attached to the central biotinyl-binding domain and is required for the catalytic activity. In terms of processing, phosphorylation at Ser-222 by AMPK inactivates the enzyme. Required for the maintenance of skeletal muscle lipid and glucose homeostasis. In terms of tissue distribution, widely expressed with highest levels in heart, skeletal muscle, liver, adipose tissue, mammary gland, adrenal gland and colon. Isoform 3 is expressed in skeletal muscle, adipose tissue and liver (at protein level). Isoform 3 is detected at high levels in adipose tissue with lower levels in heart, liver, skeletal muscle and testis.

Its subcellular location is the mitochondrion. It carries out the reaction hydrogencarbonate + acetyl-CoA + ATP = malonyl-CoA + ADP + phosphate + H(+). It participates in lipid metabolism; malonyl-CoA biosynthesis; malonyl-CoA from acetyl-CoA: step 1/1. With respect to regulation, activity is increased by oligomerization of the protein into filaments. The oligomerization and the activity of the enzyme are inhibited by phosphorylation at Ser-222. Inhibited by its product, malonyl-CoA. Activated by citrate. Activation by MID1IP1 is citrate-dependent. Soraphen A, inhibits the enzyme by preventing the formation of active filamentous oligomers. Its function is as follows. Mitochondrial enzyme that catalyzes the carboxylation of acetyl-CoA to malonyl-CoA and plays a central role in fatty acid metabolism. Catalyzes a 2 steps reaction starting with the ATP-dependent carboxylation of the biotin carried by the biotin carboxyl carrier (BCC) domain followed by the transfer of the carboxyl group from carboxylated biotin to acetyl-CoA. Through the production of malonyl-CoA that allosterically inhibits carnitine palmitoyltransferase 1 at the mitochondria, negatively regulates fatty acid oxidation. Together with its cytosolic isozyme ACACA, which is involved in de novo fatty acid biosynthesis, promotes lipid storage. In Homo sapiens (Human), this protein is Acetyl-CoA carboxylase 2.